We begin with the raw amino-acid sequence, 100 residues long: Large ribosomal subunit protein eL14 (100 aa).

It belongs to the eukaryotic ribosomal protein eL14 family.

In Aeropyrum pernix (strain ATCC 700893 / DSM 11879 / JCM 9820 / NBRC 100138 / K1), this protein is Large ribosomal subunit protein eL14.